The sequence spans 147 residues: Cytochrome c-type biogenesis protein CcmE (147 aa).

Topologically, residues Met1 to Arg7 are cytoplasmic. The chain crosses the membrane as a helical; Signal-anchor for type II membrane protein span at residues Phe8–Ala28. Over Phe29–Leu147 the chain is Periplasmic. His123 and Tyr127 together coordinate heme.

Belongs to the CcmE/CycJ family.

It localises to the cell inner membrane. Its function is as follows. Heme chaperone required for the biogenesis of c-type cytochromes. Transiently binds heme delivered by CcmC and transfers the heme to apo-cytochromes in a process facilitated by CcmF and CcmH. This is Cytochrome c-type biogenesis protein CcmE from Nitrosococcus oceani (strain ATCC 19707 / BCRC 17464 / JCM 30415 / NCIMB 11848 / C-107).